Here is a 509-residue protein sequence, read N- to C-terminus: Putative (R)-citramalate synthase CimA (509 aa).

A Pyruvate carboxyltransferase domain is found at 14–267 (VRIFDTTLRD…DTGIRTERLT (254 aa)).

The protein belongs to the alpha-IPM synthase/homocitrate synthase family. As to quaternary structure, homodimer.

It catalyses the reaction pyruvate + acetyl-CoA + H2O = (3R)-citramalate + CoA + H(+). Its pathway is amino-acid biosynthesis; L-isoleucine biosynthesis; 2-oxobutanoate from pyruvate: step 1/3. In terms of biological role, catalyzes the condensation of pyruvate and acetyl-coenzyme A to form (R)-citramalate. This is Putative (R)-citramalate synthase CimA (cimA) from Methanopyrus kandleri (strain AV19 / DSM 6324 / JCM 9639 / NBRC 100938).